A 249-amino-acid chain; its full sequence is Probable phosphatase VV2_1469 (249 aa).

Residues H8, H10, H16, H41, E74, H102, H132, D194, and H196 each contribute to the Zn(2+) site.

The protein belongs to the PHP family. Zn(2+) is required as a cofactor.

In Vibrio vulnificus (strain CMCP6), this protein is Probable phosphatase VV2_1469.